A 204-amino-acid chain; its full sequence is High frequency lysogenization protein HflD homolog (204 aa).

Belongs to the HflD family.

It is found in the cytoplasm. It localises to the cell inner membrane. The polypeptide is High frequency lysogenization protein HflD homolog (Ruthia magnifica subsp. Calyptogena magnifica).